Consider the following 330-residue polypeptide: Heat-inducible transcription repressor HrcA (330 aa).

Belongs to the HrcA family.

Functionally, negative regulator of class I heat shock genes (grpE-dnaK-dnaJ and groELS operons). Prevents heat-shock induction of these operons. The polypeptide is Heat-inducible transcription repressor HrcA (Synechococcus sp. (strain RCC307)).